We begin with the raw amino-acid sequence, 519 residues long: 2,3-bisphosphoglycerate-independent phosphoglycerate mutase (519 aa).

Residues Asp18 and Ser68 each coordinate Mn(2+). The active-site Phosphoserine intermediate is Ser68. Substrate is bound by residues His129, 159–160 (RD), Arg191, Arg197, 267–270 (RADR), and Lys341. Residues Asp408, His412, Asp449, His450, and His468 each coordinate Mn(2+).

The protein belongs to the BPG-independent phosphoglycerate mutase family. Monomer. Mn(2+) serves as cofactor.

It catalyses the reaction (2R)-2-phosphoglycerate = (2R)-3-phosphoglycerate. The protein operates within carbohydrate degradation; glycolysis; pyruvate from D-glyceraldehyde 3-phosphate: step 3/5. Its function is as follows. Catalyzes the interconversion of 2-phosphoglycerate and 3-phosphoglycerate. This chain is 2,3-bisphosphoglycerate-independent phosphoglycerate mutase, found in Coxiella burnetii (strain RSA 493 / Nine Mile phase I).